The primary structure comprises 504 residues: Patatin-like phospholipase domain-containing protein 2 (504 aa).

Topologically, residues 1-8 (MFPREKTW) are cytoplasmic. Residues 9-29 (NISFAGCGFLGVYYVGVASCL) form a helical membrane-spanning segment. Residues 10–179 (ISFAGCGFLG…SDNLPLYELK (170 aa)) enclose the PNPLA domain. The GXGXXG signature appears at 14–19 (GCGFLG). At 30–42 (REHAPFLVANATH) the chain is on the extracellular side. N39 is a glycosylation site (N-linked (GlcNAc...) asparagine). The chain crosses the membrane as a helical span at residues 43 to 63 (IYGASAGALTATALVTGVCLG). A GXSXG motif is present at residues 45–49 (GASAG). S47 (nucleophile) is an active-site residue. At 64 to 137 (EAGAKFIEVS…IISHFNSKDE (74 aa)) the chain is on the cytoplasmic side. Residue K92 forms a Glycyl lysine isopeptide (Lys-Gly) (interchain with G-Cter in ubiquitin) linkage. A helical transmembrane segment spans residues 138 to 158 (LIQANVCSGFIPVYCGLIPPS). At 159–329 (LQGVRYVDGG…TTLSNMLPVR (171 aa)) the chain is on the extracellular side. Residue D166 is the Proton acceptor of the active site. Positions 166-168 (DGG) match the DGA/G motif. The chain crosses the membrane as a helical span at residues 330 to 350 (LATAMMVPYTLPLESALSFTI). Residues 351–504 (RLLEWLPDVP…ARPVIGALGL (154 aa)) lie on the Cytoplasmic side of the membrane. S372 carries the phosphoserine; in vitro modification. At S404 the chain carries Phosphoserine; by PKA and FAM20C. S428 is subject to Phosphoserine. Residues 463–492 (APADPAPAPADPASPQHQLAGPAPLLSTPA) form a disordered region.

In terms of assembly, interacts with ABHD5; this association stimulates PNPLA2 triglyceride hydrolase activity. Interacts with SERPINF1; this interaction stimulates the phospholipase A2 activity of PNPLA2. Despite a colocalization in lipid droplets, it probably does not interact with PLIN. Interacts with PLIN5; prevents interaction with ABHD5. Interacts with FAF2. In terms of processing, phosphorylation at Ser-404 by PKA is increased during fasting and moderate intensity exercise, and moderately increases lipolytic activity. Phosphorylation at Ser-404 is increased upon beta-adrenergic stimulation. Ubiquitinated by PEX2 in response to reactive oxygen species (ROS), leading to its degradation. Ubiquitination is stimulated by LDAH. In terms of tissue distribution, highest expression in adipose tissue. Also detected in heart, skeletal muscle, and portions of the gastrointestinal tract. Detected in normal retina and retinoblastoma cells. Detected in retinal pigment epithelium and, at lower intensity, in the inner segments of photoreceptors and in the ganglion cell layer of the neural retina (at protein level).

It localises to the lipid droplet. The protein localises to the cell membrane. It is found in the cytoplasm. The catalysed reaction is a triacylglycerol + H2O = a diacylglycerol + a fatty acid + H(+). It catalyses the reaction a triacylglycerol + H2O = a 1,2-diacylglycerol + a fatty acid + H(+). It carries out the reaction a triacylglycerol + H2O = a 1,3-diacylglycerol + a fatty acid + H(+). The enzyme catalyses a triacyl-sn-glycerol + H2O = a 1,3-diacyl-sn-glycerol + a fatty acid + H(+). The catalysed reaction is a triacyl-sn-glycerol + H2O = a 2,3-diacyl-sn-glycerol + a fatty acid + H(+). It catalyses the reaction a 1-acylglycerol + a 1,3-diacylglycerol = a triacylglycerol + glycerol. It carries out the reaction a 1-acylglycerol + a 1,2-diacylglycerol = a triacylglycerol + glycerol. The enzyme catalyses 2 a 1-acylglycerol = a 1,2-diacylglycerol + glycerol. The catalysed reaction is a triacylglycerol + all-trans-retinol = an all-trans-retinyl ester + a diacylglycerol. It catalyses the reaction 1,2-di-(9Z-octadecenoyl)-glycerol + (9Z)-octadecenoate + H(+) = 1,2,3-tri-(9Z-octadecenoyl)-glycerol + H2O. It carries out the reaction 1,2,3-tri-(9Z-octadecenoyl)-glycerol + H2O = 1,3-di-(9Z-octadecenoyl)-glycerol + (9Z)-octadecenoate + H(+). The enzyme catalyses 1-(9Z-octadecenoyl)-glycerol + 1,3-di-(9Z-octadecenoyl)-glycerol = 1,2,3-tri-(9Z-octadecenoyl)-glycerol + glycerol. The catalysed reaction is 1-(9Z-octadecenoyl)-glycerol + 1,2-di-(9Z-octadecenoyl)-glycerol = 1,2,3-tri-(9Z-octadecenoyl)-glycerol + glycerol. It catalyses the reaction 2 1-(9Z-octadecenoyl)-glycerol = 1,2-di-(9Z-octadecenoyl)-glycerol + glycerol. It carries out the reaction 1,2,3-tri-(9Z-octadecenoyl)-glycerol + all-trans-retinol = all-trans-retinyl 9Z-octadecenoate + di-(9Z)-octadecenoylglycerol. The enzyme catalyses 1,2,3-tri-(9Z)-hexadecenoylglycerol + H2O = 1,3-di-(9Z)-hexadecenoylglycerol + (9Z)-hexadecenoate + H(+). The catalysed reaction is 1,2,3-tri-(9Z,12Z)-octadecadienoylglycerol + H2O = 1,3-di-(9Z,12Z)-octadecadienoylglycerol + (9Z,12Z)-octadecadienoate + H(+). It catalyses the reaction 1,2,3-tri-(9Z,12Z,15Z)-octadecatrienoylglycerol + H2O = 1,3-di-(9Z,12Z,15Z)-octadecatrienoylglycerol + (9Z,12Z,15Z)-octadecatrienoate + H(+). It carries out the reaction 1,3-di-(9Z)-octadecenoyl-2-hexadecanoylglycerol + H2O = 1,3-di-(9Z-octadecenoyl)-glycerol + hexadecanoate + H(+). The enzyme catalyses 1,2-di-(9Z)-octadecenoyl-3-hexadecanoyl-sn-glycerol + H2O = 1-(9Z)-octadecenoyl-3-hexadecanoyl-sn-glycerol + (9Z)-octadecenoate + H(+). The catalysed reaction is 1-hexadecanoyl-2,3-di-(9Z)-octadecenoyl-sn-glycerol + H2O = 1-hexadecanoyl-3-(9Z)-octadecenoyl-sn-glycerol + (9Z)-octadecenoate + H(+). It catalyses the reaction 1,2,3-tri-(9Z-octadecenoyl)-glycerol + H2O = 2,3-di-(9Z)-octadecenoyl-sn-glycerol + (9Z)-octadecenoate + H(+). It carries out the reaction 1,2,3-tri-(9Z)-hexadecenoylglycerol + H2O = 2,3-di-(9Z)-hexadecenoyl-sn-glycerol + (9Z)-hexadecenoate + H(+). The enzyme catalyses 1,2,3-tri-(9Z,12Z)-octadecadienoylglycerol + H2O = 2,3-di-(9Z,12Z)-octadecadienoyl-sn-glycerol + (9Z,12Z)-octadecadienoate + H(+). The catalysed reaction is 1,2,3-tri-(9Z,12Z,15Z)-octadecatrienoylglycerol + H2O = 2,3-di-(9Z,12Z,15Z)-octadecatrienoyl-sn-glycerol + (9Z,12Z,15Z)-octadecatrienoate + H(+). It catalyses the reaction 1,3-di-(9Z)-octadecenoyl-2-hexadecanoylglycerol + H2O = 2-hexadecanoyl-3-(9Z)-octadecenoyl-sn-glycerol + (9Z)-octadecenoate + H(+). It carries out the reaction 1-hexadecanoyl-2,3-di-(9Z)-octadecenoyl-sn-glycerol + H2O = 2,3-di-(9Z)-octadecenoyl-sn-glycerol + hexadecanoate + H(+). The enzyme catalyses 1,2-di-(9Z)-octadecenoyl-3-hexadecanoyl-sn-glycerol + H2O = 2-(9Z-octadecenoyl)-3-hexadecanoyl-sn-glycerol + (9Z)-octadecenoate + H(+). The catalysed reaction is a 1,2-diacyl-sn-glycero-3-phosphocholine + H2O = a 1-acyl-sn-glycero-3-phosphocholine + a fatty acid + H(+). It catalyses the reaction 1,2,3-tri-(9Z-octadecenoyl)-glycerol + 9-hydroxy-octadecanoate = 9-(9Z-octadecenoyloxy)-octadecanoate + 2,3-di-(9Z)-octadecenoyl-sn-glycerol. It carries out the reaction 1-hexadecanoyl-2,3-di-(9Z)-octadecenoyl-sn-glycerol + 9-hydroxy-octadecanoate = 9-hexadecanoyloxy-octadecanoate + 2,3-di-(9Z)-octadecenoyl-sn-glycerol. The enzyme catalyses 1,2,3-tri-(10Z)-heptadecenoylglycerol + 9-hydroxy-octadecanoate = 2,3-di-(10Z-heptadecenoyl)-sn-glycerol + 9-(10Z-heptadecenoyloxy)-octadecanoate. The catalysed reaction is 1,2,3-tri-(9Z,12Z)-octadecadienoylglycerol + 9-hydroxy-octadecanoate = 2,3-di-(9Z,12Z)-octadecadienoyl-sn-glycerol + 9-(9Z,12Z-octadecadienoyloxy)-octadecanoate. It catalyses the reaction 1,2,3-tri-(9Z)-hexadecenoylglycerol + 9-hydroxy-octadecanoate = 2,3-di-(9Z)-hexadecenoyl-sn-glycerol + 9-(9Z-hexadecenoyloxy)-octadecanoate. It carries out the reaction 9-hydroxy-octadecanoate + 1,2-di-(9Z-octadecenoyl)-sn-glycerol = 9-(9Z-octadecenoyloxy)-octadecanoate + 2-(9Z-octadecenoyl)-glycerol. The enzyme catalyses 1-hexadecanoyl-2,3-di-(9Z)-octadecenoyl-sn-glycerol + 9-hydroxy-octadecanoate = 1-hexadecanoyl-3-(9Z)-octadecenoyl-sn-glycerol + 9-(9Z-octadecenoyloxy)-octadecanoate. The protein operates within glycerolipid metabolism; triacylglycerol degradation. With respect to regulation, the triglyceride lipase activity is inhibited by BEL ((E)-6-(bromomethylene)-3-(1-naphthalenyl)-2H-tetrahydropyran-2-one), a suicide substrate inhibitor. No differences in the acylglycerol transacylase was detected in the presence or absence of ATP. Catalyzes the initial step in triglyceride hydrolysis in adipocyte and non-adipocyte lipid droplets. Exhibits a strong preference for the hydrolysis of long-chain fatty acid esters at the sn-2 position of the glycerol backbone and acts coordinately with LIPE/HLS and DGAT2 within the lipolytic cascade. Also possesses acylglycerol transacylase and phospholipase A2 activities. Transfers fatty acid from triglyceride to retinol, hydrolyzes retinylesters, and generates 1,3-diacylglycerol from triglycerides. Regulates adiposome size and may be involved in the degradation of adiposomes. Catalyzes the formation of an ester bond between hydroxy fatty acids and fatty acids derived from triglycerides or diglycerides to generate fatty acid esters of hydroxy fatty acids (FAHFAs) in adipocytes. Acts antagonistically with LDAH in regulation of cellular lipid stores. Inhibits LDAH-stimulated lipid droplet fusion. May play an important role in energy homeostasis. May play a role in the response of the organism to starvation, enhancing hydrolysis of triglycerides and providing free fatty acids to other tissues to be oxidized in situations of energy depletion. The chain is Patatin-like phospholipase domain-containing protein 2 from Homo sapiens (Human).